Here is a 285-residue protein sequence, read N- to C-terminus: N(G),N(G)-dimethylarginine dimethylaminohydrolase 1 (285 aa).

A2 is subject to N-acetylalanine. 6 residues coordinate substrate: L30, D73, E78, D79, R98, and R145. The active-site Proton donor is H173. C222 bears the S-nitrosocysteine mark. V268 provides a ligand contact to substrate. S-nitrosocysteine is present on C274. C274 acts as the Nucleophile in catalysis. C274 contacts Zn(2+).

In terms of assembly, monomer. As to expression, widely distributed, highest concentrations found in brain, brain cortex and kidney (at protein level).

It catalyses the reaction N(omega),N(omega)-dimethyl-L-arginine + H2O = dimethylamine + L-citrulline. It carries out the reaction N(omega)-methyl-L-arginine + H2O = L-citrulline + methylamine. With respect to regulation, copurifies with a tightly bound zinc ion. Activated by release of zinc. His and other agents that promote the release of bound zinc ions activate the enzyme (in vitro). Inhibited by S-nitrosylation. Zinc protects the protein against S-nitrosylation. Hydrolyzes N(G),N(G)-dimethyl-L-arginine (ADMA) and N(G)-monomethyl-L-arginine (MMA) which act as inhibitors of NOS. Has therefore a role in the regulation of nitric oxide generation. The protein is N(G),N(G)-dimethylarginine dimethylaminohydrolase 1 (DDAH1) of Bos taurus (Bovine).